Consider the following 179-residue polypeptide: Large ribosomal subunit protein uL5 (179 aa).

Belongs to the universal ribosomal protein uL5 family. As to quaternary structure, part of the 50S ribosomal subunit; part of the 5S rRNA/L5/L18/L25 subcomplex. Contacts the 5S rRNA and the P site tRNA. Forms a bridge to the 30S subunit in the 70S ribosome.

This is one of the proteins that bind and probably mediate the attachment of the 5S RNA into the large ribosomal subunit, where it forms part of the central protuberance. In the 70S ribosome it contacts protein S13 of the 30S subunit (bridge B1b), connecting the 2 subunits; this bridge is implicated in subunit movement. Contacts the P site tRNA; the 5S rRNA and some of its associated proteins might help stabilize positioning of ribosome-bound tRNAs. The chain is Large ribosomal subunit protein uL5 from Buchnera aphidicola subsp. Baizongia pistaciae (strain Bp).